A 275-amino-acid chain; its full sequence is MSRRKTATKIIDYLEKRINCENIMRYTDEYLDNNSPDKSLVIDEVPVSFTIIPYNANENYSRQLVSTEGDREDKPDFNDIKHMFDVFDFMTEANNTGFEHFPYIYGVLDCLNDIDSTVYVYYEKFDGTLPLLIDNIEHPSDWYDIVFQIVLIIMYIKYVGKMSFKAAPERFLYKKITKPYYKEYSVGDTTLNINHKYLIVCWDTNTTDFEGIQNSESSSENKLPIIDLDFLTEYINVNKDSLKIQPSNRIIKLIQEIKNQPDNIPKILVQYYGPQ.

The protein resides in the virion. This is an uncharacterized protein from Acanthamoeba polyphaga (Amoeba).